A 404-amino-acid chain; its full sequence is Cysteine desulfurase IscS (404 aa).

Residues A73–T74, N153, Q181, and S201–H203 contribute to the pyridoxal 5'-phosphate site. K204 bears the N6-(pyridoxal phosphate)lysine mark. T241 lines the pyridoxal 5'-phosphate pocket. The active-site Cysteine persulfide intermediate is C327. C327 contacts [2Fe-2S] cluster.

This sequence belongs to the class-V pyridoxal-phosphate-dependent aminotransferase family. NifS/IscS subfamily. In terms of assembly, homodimer. Forms a heterotetramer with IscU, interacts with other sulfur acceptors. The cofactor is pyridoxal 5'-phosphate.

It is found in the cytoplasm. The enzyme catalyses (sulfur carrier)-H + L-cysteine = (sulfur carrier)-SH + L-alanine. It functions in the pathway cofactor biosynthesis; iron-sulfur cluster biosynthesis. Master enzyme that delivers sulfur to a number of partners involved in Fe-S cluster assembly, tRNA modification or cofactor biosynthesis. Catalyzes the removal of elemental sulfur atoms from cysteine to produce alanine. Functions as a sulfur delivery protein for Fe-S cluster synthesis onto IscU, an Fe-S scaffold assembly protein, as well as other S acceptor proteins. The protein is Cysteine desulfurase IscS of Anaeromyxobacter dehalogenans (strain 2CP-C).